A 70-amino-acid chain; its full sequence is MAIQSKYTNTQVEALISELLAVLAKHQAPTDLSLMVLGNCVTHLLDKKVPGESRQKVAEQFAKALTQSVK.

This sequence belongs to the UPF0352 family.

This Shewanella frigidimarina (strain NCIMB 400) protein is UPF0352 protein Sfri_2492.